Consider the following 476-residue polypeptide: NAD(+) hydrolase ThsA (476 aa).

The region spanning Asn-4–Lys-283 is the Deacetylase sirtuin-type domain. NAD(+) contacts are provided by Ala-23, Asp-114, and His-152. His-152 acts as the Proton acceptor in catalysis. Residues Thr-284–Asn-476 form an SLOG (STALD) domain, binds 3'cADPR region. 3'cADPR-binding residues include Gly-289, Ser-290, Leu-326, Phe-357, Arg-371, Lys-388, Gly-399, and Glu-403.

Belongs to the soluble Thoeris ThsA family. As to quaternary structure, homotetramer formed by dimer of dimers; homooctamers are occasionally seen. Not seen to interact with ThsB. In the absence of the signal generated by ThsB, 63% monomer and 20% homotetramer; in the presence of the ThsB signal product 40% of the protein is dimeric. Homotetramer in solution; probably dimerizes via the N-terminal sirtuin-like domain.

Its subcellular location is the cytoplasm. The catalysed reaction is NAD(+) + H2O = ADP-D-ribose + nicotinamide + H(+). With respect to regulation, activated by a molecule generated by endogenous ThsB (AC J8G8J6) or ThsB' (AC J8CSK2); activation in vitro is 50-100x more sensitive to 3' cyclic ADP-D-ribose (3'cADPR) than 2'cADPR. 3'cADPR activates the NADase function of ThsA by binding to the SLOG domain, which changes its tetramer organization, allowing NAD to access the active site. Also activated by a signal molecule generated by B.dafuensis TIR1 (AC A0A5B8Z670) and TIR2 (AC A0A5B8Z260), and by BdTIR (AC I1GTC2), a plant protein involved in defense against bacterial infection. The signal produced by BdTIR is probably 2'cADPR, which activates this protein, the signal produced by endogenous ThsB' is probably 3'cADPR. NAD(+) hydrolyzing component (NADase) of the Thoeris antiviral defense system, composed of ThsA and ThsB. Activated by a signal molecule generated by endogenous ThsB (AC J8G8J6) or ThsB' (AC J8CSK2, probably 3'cADPR), by TIR1 and TIR2 from B.dafuensis or by BdTIR from B.distachyon (AC I1GTC2, probably 2'cADPR). Upon activation binds and hydrolyzes NAD(+), leading to cell death and inhibition of phage replication. Not seen to bind DNA. Activation is 50-100x more sensitive to 3' cyclic ADP-D-ribose (3'cADPR) than 2'cADPR. In another paper ThsA is not activated by any tested cADPR isomer, although it binds 3'cADPR; it was suggested the protein is already in a fully active state. Expression of ThsA and ThsB in B.subtilis (strain BEST7003) confers resistance to phages phi29, SBSphiC, SBSphiJ and SPO1. At multiplicity of infection (MOI) of 0.05 Thoeris-encoding cultures grow normally when infected with SPO1, at MOI 5 cultures collapse prematurely by 90 minutes post-infection, thus the phage are not able to complete a replication cycle. NAD(+) levels fall and ADP-D-ribose levels rise 60 minutes post-infection. Thoeris cultures eventually recover, but retain the same susceptibility to SPO1. This is NAD(+) hydrolase ThsA from Bacillus cereus (strain MSX-D12).